The chain runs to 154 residues: uncharacterized protein (154 aa).

This is an uncharacterized protein from Sulfolobus islandicus rod-shaped virus 1 (SIRV-1).